A 107-amino-acid chain; its full sequence is U1-lycotoxin-Ls1f (107 aa).

The signal sequence occupies residues 1 to 20 (MMKVLVVVALLVTLISYSSS). Positions 21-41 (EGIDDLEADELLSLMANEQTR) are excised as a propeptide. Intrachain disulfides connect Cys44/Cys59, Cys51/Cys68, Cys58/Cys86, and Cys70/Cys84.

Belongs to the neurotoxin 19 (CSTX) family. 04 (U1-Lctx) subfamily. Expressed by the venom gland.

Its subcellular location is the secreted. The polypeptide is U1-lycotoxin-Ls1f (Lycosa singoriensis (Wolf spider)).